The sequence spans 2278 residues: 1-phosphatidylinositol 3-phosphate 5-kinase FAB1 (2278 aa).

Disordered regions lie at residues 1–30 (MSSE…SVNT) and 76–144 (PPTS…LQLP). N-acetylserine is present on Ser-2. The required for localization to the vacuole membrane stretch occupies residues 2–676 (SSEEPHASIS…NSTKSFQRAQ (675 aa)). Low complexity-rich tracts occupy residues 18–28 (VRSSSTGTSSV) and 76–89 (PPTS…TSTS). A compositionally biased stretch (polar residues) spans 90–128 (HVTGTASHSNIKANANTSTSVNKKNLPPTTSGRIPSSTI). Ser-186 bears the Phosphoserine mark. An FYVE-type zinc finger spans residues 240 to 299 (DESSKECFSCGKTFNTFRRKHHCRICGQIFCSSCTLLIDGDRFGCHAKMRVCYNCYEHAD). Residues Cys-246, Cys-249, Cys-262, Cys-265, Cys-270, Cys-273, Cys-291, and Cys-294 each coordinate Zn(2+). Disordered regions lie at residues 302–337 (EDSS…HSHS), 472–500 (ITIN…NNPA), 514–534 (NSVN…AQSS), 556–697 (FNYN…PNNS), and 727–766 (DSSP…NINT). Residues 472–498 (ITINNLNNTTSNNSNYNNTNSNSNINN) show a composition bias toward low complexity. Positions 557–570 (NYNSKGPSQQNDTA) are enriched in polar residues. A compositionally biased stretch (low complexity) spans 571–601 (NGNNDNNNNNNNNNNNNNNNSASGIADNNNI). The span at 602-611 (PSNDNGTTFT) shows a compositional bias: polar residues. Over residues 634-644 (LNEEDSSEDEG) the composition is skewed to acidic residues. Positions 665–679 (MRNSTKSFQRAQASL) are enriched in polar residues. The span at 682-692 (MRFRRKSKSKH) shows a compositional bias: basic residues. Polar residues predominate over residues 729–741 (SPLQDKASSSAAS). The span at 749 to 763 (SNSSGSNNNSNSNSN) shows a compositional bias: low complexity. A CCT domain region spans residues 766 to 1039 (TDPWKRIASI…KIKQVSEFMV (274 aa)). Residues 1181 to 1500 (SSSQNLLGTG…TAKQLKKLFY (320 aa)) are CCR domain. Residues 1506 to 1554 (DSEDKKSLHDEKAKTRKPEKNELPLEGLKDVEKPKIDSKNTTENRDRTN) are compositionally biased toward basic and acidic residues. The disordered stretch occupies residues 1506-1627 (DSEDKKSLHD…TRPNIRKMSS (122 aa)). Residues 1555–1564 (EPQNAVTITT) are compositionally biased toward polar residues. Positions 1580–1595 (LTVTPSASSVSSSLTP) are enriched in low complexity. Phosphoserine occurs at positions 1627 and 1630. Positions 1766-1776 (SGKTTASTHLN) are enriched in polar residues. 2 disordered regions span residues 1766-1804 (SGKT…EPLP) and 1891-1972 (QQQQ…THSQ). Residues 1780-1799 (VVKETSENPKSIVRESDNSK) are compositionally biased toward basic and acidic residues. Residues 1918–1932 (DPSVNISPSVSTTSH) are compositionally biased toward polar residues. The PIPK domain occupies 1932–2266 (HNKGRDSEIS…RFREAMERYI (335 aa)). Position 1938 is a phosphoserine (Ser-1938). The residue at position 1953 (Thr-1953) is a Phosphothreonine.

In terms of assembly, component of the PI(3,5)P2 regulatory complex, composed of ATG18, FIG4, FAB1, VAC14 and VAC7. VAC14 nucleates the assembly of the complex and serves as a scaffold. It depends on Mg(2+) as a cofactor. Mn(2+) is required as a cofactor.

It is found in the vacuole membrane. The protein resides in the endosome membrane. It carries out the reaction a 1,2-diacyl-sn-glycero-3-phospho-(1D-myo-inositol-3-phosphate) + ATP = a 1,2-diacyl-sn-glycero-3-phospho-(1D-myo-inositol-3,5-bisphosphate) + ADP + H(+). The enzyme catalyses 1,2-dihexadecanoyl-sn-glycero-3-phospho-(1D-myo-inositol-3-phosphate) + ATP = 1,2-dihexadecanoyl-sn-glycero-3-phospho-(1D-myo-inositol-3,5-phosphate) + ADP + H(+). Its activity is regulated as follows. Activated by VAC14 and VAC7. VAC14 acts as a specific osmotic response regulator. Functionally, the PI(3,5)P2 regulatory complex regulates both the synthesis and turnover of phosphatidylinositol 3,5-bisphosphate (PtdIns(3,5)P2). Catalyzes the phosphorylation of phosphatidylinositol 3-phosphate on the fifth hydroxyl of the myo-inositol ring, to form phosphatidylinositol 3,5-bisphosphate. Required for endocytic-vacuolar pathway and nuclear migration. The product of the reaction, PI(3,5)P2 is an important regulator of vacuole homeostasis perhaps by controlling membrane flux to and/or from the vacuole. PI(3,5)P2 regulates the transition between trans-SNARE complex formation and vacuole membrane fusion. Hyperosmotic shock-induced increase in the levels of PtdIns(3,5)P2 requires the presence of VAC7, VAC14, and/or FIG4. The sequence is that of 1-phosphatidylinositol 3-phosphate 5-kinase FAB1 from Saccharomyces cerevisiae (strain ATCC 204508 / S288c) (Baker's yeast).